Reading from the N-terminus, the 224-residue chain is UPF0758 protein PBPRA0202 (224 aa).

Residues 102–224 enclose the MPN domain; it reads VLTSPQHTRH…IVSFSEQGWL (123 aa). Residues His-173, His-175, and Asp-186 each coordinate Zn(2+). The JAMM motif motif lies at 173 to 186; that stretch reads HNHPSGVAEPSQSD.

This sequence belongs to the UPF0758 family.

The chain is UPF0758 protein PBPRA0202 from Photobacterium profundum (strain SS9).